Consider the following 577-residue polypeptide: Peroxynitrite isomerase THAP4 (577 aa).

A THAP-type zinc finger spans residues 1-85 (MVICCAAVNC…LKPTAVPSIF (85 aa)). Residues 84-221 (IFHLTEKKRG…DKSGISMDDF (138 aa)) form a disordered region. Residues 157 to 170 (AAQEAASQEQAQQA) are compositionally biased toward low complexity. Serine 163 carries the post-translational modification Phosphoserine. Residues 235-238 (LHSY) carry the HCFC1-binding motif (HBM) motif. Serine 239 is subject to Phosphoserine. Positions 240–324 (FSSKHTRERP…AVQSEHSDAS (85 aa)) are disordered. Over residues 247–266 (ERPSVPREPIDRKRLKKDVE) the composition is skewed to basic and acidic residues. The span at 290–300 (TATPQKPSQSP) shows a compositional bias: low complexity. The segment at 415–577 (PPKMNPVVEP…LHVTYKKVTP (163 aa)) is nitrobindin. Heme b-binding residues include threonine 444 and histidine 567.

It in the C-terminal section; belongs to the nitrobindin family. As to quaternary structure, homodimer. Requires heme b as cofactor.

It is found in the cytoplasm. Its subcellular location is the nucleus. The enzyme catalyses peroxynitrite = nitrate. Its pathway is nitrogen metabolism. Functionally, heme-binding protein able to scavenge peroxynitrite and to protect free L-tyrosine against peroxynitrite-mediated nitration, by acting as a peroxynitrite isomerase that converts peroxynitrite to nitrate. Therefore, this protein likely plays a role in peroxynitrite sensing and in the detoxification of reactive nitrogen and oxygen species (RNS and ROS, respectively). Is able to bind nitric oxide (NO) in vitro, but may act as a sensor of peroxynitrite levels in vivo, possibly modulating the transcriptional activity residing in the N-terminal region. This chain is Peroxynitrite isomerase THAP4, found in Homo sapiens (Human).